The chain runs to 843 residues: Aconitase AMT8-2 (843 aa).

258–260 (DSH) provides a ligand contact to substrate. [4Fe-4S] cluster contacts are provided by cysteine 450, cysteine 513, and cysteine 516. Residues arginine 536, arginine 541, and 712-713 (SR) each bind substrate.

Belongs to the aconitase/IPM isomerase family.

It participates in mycotoxin biosynthesis. Its function is as follows. Aconitase; part of the gene clusters that mediate the biosynthesis of AM-toxins, host-selective toxins (HSTs) causing Alternaria blotch on apple, a worldwide distributed disease. AM-toxins are cyclic depsipeptides containing the 3 residues 2-hydroxy-isovaleric acid (2-HIV), dehydroalanine, L-alanine which are common for all 3 AM-toxins I to III. The fourth precursor is L-alpha-amino-methoxyphenyl-valeric acid (L-Amv) for AM-toxin I, L-alpha-amino-phenyl-valeric acid (L-Apv) for AM-toxin II, and L-alpha-amino-hydroxyphenyl-valeric acid (L-Ahv) for AM-toxin III. AM-toxins have two target sites for affecting susceptible apple cells; they cause invagination of the plasma membrane and electrolyte loss and chloroplast disorganization. The non-ribosomal peptide synthetase AMT1 contains 4 catalytic modules and is responsible for activation of each residue in AM-toxin. The aldo-keto reductase AMT2 catalyzes the conversion of 2-keto-isovaleric acid (2-KIV) to 2-hydroxy-isovaleric acid (2-HIV), one of the precursor residues incorporated by AMT1 during AM-toxin biosynthesis, by reduction of its ketone to an alcohol. The cytochrome P450 monooxygenase AMT3 and the thioesterase AMT4 are also important for AM-toxin production, but their exact function within the AM-toxin biosynthesis are not known yet. Up to 21 proteins (including AMT1 to AMT4) are predicted to be involved in AM-toxin biosynthesis since their expression ishighly up-regulated in AM-toxin-producing cultures. This Alternaria alternata (Alternaria rot fungus) protein is Aconitase AMT8-2.